The chain runs to 242 residues: Carboxy-S-adenosyl-L-methionine synthase (242 aa).

S-adenosyl-L-methionine is bound by residues Tyr-39, 64–66 (GCS), 89–90 (DN), 117–118 (DI), Asn-132, and Arg-199.

Belongs to the class I-like SAM-binding methyltransferase superfamily. Cx-SAM synthase family. As to quaternary structure, homodimer.

The enzyme catalyses prephenate + S-adenosyl-L-methionine = carboxy-S-adenosyl-L-methionine + 3-phenylpyruvate + H2O. In terms of biological role, catalyzes the conversion of S-adenosyl-L-methionine (SAM) to carboxy-S-adenosyl-L-methionine (Cx-SAM). The sequence is that of Carboxy-S-adenosyl-L-methionine synthase from Aliivibrio fischeri (strain MJ11) (Vibrio fischeri).